The primary structure comprises 735 residues: Muskelin (735 aa).

N-acetylalanine is present on Ala-2. The region spanning 172–204 is the LisH domain; the sequence is REQEAIRLCLKHFRQHNYTEAFESLQKKTKIAL. Positions 206-258 constitute a CTLH domain; the sequence is HPMLTDMHDKLVLKGDFDACEELIEKAVNDGLFNQYISQQEYKPRWSQIIPKS. Kelch repeat units follow at residues 284-330, 339-391, 400-458, 469-515, 526-578, and 597-651; these read TVYL…SCHK, QIYT…FDHQ, MIYT…SRIG, CLYV…TGFT, EIHV…SLQE, and VHYL…AQMD.

In terms of assembly, homodimer; may form higher oligomers. Identified in the CTLH complex that contains GID4, RANBP9 and/or RANBP10, MKLN1, MAEA, RMND5A (or alternatively its paralog RMND5B), GID8, ARMC8, WDR26 and YPEL5. Within this complex, MAEA, RMND5A (or alternatively its paralog RMND5B), GID8, WDR26, and RANBP9 and/or RANBP10 form the catalytic core, while GID4, MKLN1, ARMC8 and YPEL5 have ancillary roles. Interacts with RANBP9. Part of a complex consisting of RANBP9, MKLN1 and GID8. Interacts with GABRA1. Interacts with the C-terminal tail of PTGER3.

Its subcellular location is the cytoplasm. It localises to the cell projection. The protein resides in the ruffle. It is found in the cell cortex. The protein localises to the synapse. Its subcellular location is the postsynapse. Its function is as follows. Component of the CTLH E3 ubiquitin-protein ligase complex that selectively accepts ubiquitin from UBE2H and mediates ubiquitination and subsequent proteasomal degradation of the transcription factor HBP1. Required for internalization of the GABA receptor GABRA1 from the cell membrane via endosomes and subsequent GABRA1 degradation. Acts as a mediator of cell spreading and cytoskeletal responses to the extracellular matrix component THBS1. This chain is Muskelin (Mkln1), found in Rattus norvegicus (Rat).